The primary structure comprises 122 residues: Large ribosomal subunit protein uL14 (122 aa).

Belongs to the universal ribosomal protein uL14 family. Part of the 50S ribosomal subunit. Forms a cluster with proteins L3 and L19. In the 70S ribosome, L14 and L19 interact and together make contacts with the 16S rRNA in bridges B5 and B8.

Functionally, binds to 23S rRNA. Forms part of two intersubunit bridges in the 70S ribosome. This Desulforapulum autotrophicum (strain ATCC 43914 / DSM 3382 / VKM B-1955 / HRM2) (Desulfobacterium autotrophicum) protein is Large ribosomal subunit protein uL14.